The following is a 377-amino-acid chain: Naringenin,2-oxoglutarate 3-dioxygenase (377 aa).

The 105-residue stretch at 193 to 297 (CVDMDQKVVV…RLSIATFQNP (105 aa)) folds into the Fe2OG dioxygenase domain. Residues His220, Asp222, and His278 each coordinate Fe cation. Residue Arg288 coordinates 2-oxoglutarate.

This sequence belongs to the iron/ascorbate-dependent oxidoreductase family. Fe(2+) serves as cofactor. L-ascorbate is required as a cofactor.

It carries out the reaction a (2S)-flavan-4-one + 2-oxoglutarate + O2 = a (2R,3R)-dihydroflavonol + succinate + CO2. It functions in the pathway secondary metabolite biosynthesis; flavonoid biosynthesis. Catalyzes the 3-beta-hydroxylation of 2S-flavanones to 2R,3R-dihydroflavonols which are intermediates in the biosynthesis of flavonols, anthocyanidins, catechins and proanthocyanidins in plants. The chain is Naringenin,2-oxoglutarate 3-dioxygenase from Hordeum vulgare (Barley).